A 249-amino-acid polypeptide reads, in one-letter code: Metallo-beta-lactamase type 2 (249 aa).

Positions 1–18 (MKTVFILISMLFPVAVMA) are cleaved as a signal peptide. The Zn(2+) site is built by His99, His101, Asp103, His162, and Cys181. Lys184 and Asn193 together coordinate substrate. His223 is a binding site for Zn(2+).

It belongs to the metallo-beta-lactamase superfamily. Class-B beta-lactamase family. As to quaternary structure, monomer. Zn(2+) is required as a cofactor.

It localises to the periplasm. The catalysed reaction is a beta-lactam + H2O = a substituted beta-amino acid. With respect to regulation, competitively inhibited by 4-morpholineethanesulfonic acid (MES), SB236050 and biphenyl tetrazoles (BPTs). Also inhibited by chelating agents such as EDTA and 1,10-phenanthroline. CcrA is not susceptible to inactivation by the beta-lactamase-blocking agents clavulanic acid or tazobactam. Confers resistance to the different beta-lactams antibiotics (penicillin, cephalosporin and carbapenem) via the hydrolysis of the beta-lactam ring. This Bacteroides fragilis protein is Metallo-beta-lactamase type 2.